Reading from the N-terminus, the 184-residue chain is dCTP deaminase (184 aa).

DCTP contacts are provided by residues K107 to R112, T131 to E133, Q152, Y166, and Q176. Catalysis depends on E133, which acts as the Proton donor/acceptor.

It belongs to the dCTP deaminase family. Homotrimer.

The catalysed reaction is dCTP + H2O + H(+) = dUTP + NH4(+). The protein operates within pyrimidine metabolism; dUMP biosynthesis; dUMP from dCTP (dUTP route): step 1/2. In terms of biological role, catalyzes the deamination of dCTP to dUTP. In Paramagnetospirillum magneticum (strain ATCC 700264 / AMB-1) (Magnetospirillum magneticum), this protein is dCTP deaminase.